Here is a 185-residue protein sequence, read N- to C-terminus: Ribosome-recycling factor (185 aa).

This sequence belongs to the RRF family.

It localises to the cytoplasm. Functionally, responsible for the release of ribosomes from messenger RNA at the termination of protein biosynthesis. May increase the efficiency of translation by recycling ribosomes from one round of translation to another. The protein is Ribosome-recycling factor of Hahella chejuensis (strain KCTC 2396).